Consider the following 218-residue polypeptide: MNRQKVIAIDGPGASGKGTVAARVAAALGYDYLDTGALYRLTALYAQKQGVGWHDEENVSELAKKLPAVFSDSRILLGGEDVSDGIRTEAIGMGASAVAQLPKVRASLLQRQRDFLTEKGLVADGRDTGSVVFPQAELKIFLTAESKIRAERRAKQIGIPCEGLAFERILSDIEARDEADRNRKVAPLKQQPDALLLDTSRLTIEETVKKVLDWYRKV.

G11–T19 is a binding site for ATP.

This sequence belongs to the cytidylate kinase family. Type 1 subfamily.

The protein localises to the cytoplasm. The catalysed reaction is CMP + ATP = CDP + ADP. It carries out the reaction dCMP + ATP = dCDP + ADP. The polypeptide is Cytidylate kinase (Neisseria meningitidis serogroup A / serotype 4A (strain DSM 15465 / Z2491)).